Consider the following 262-residue polypeptide: Phosphonates import ATP-binding protein PhnC (262 aa).

Residues 5–253 form the ABC transporter domain; that stretch reads IRVEKLAKTF…RFDHLYRSIN (249 aa). Position 37-44 (37-44) interacts with ATP; sequence GPSGSGKS.

Belongs to the ABC transporter superfamily. Phosphonates importer (TC 3.A.1.9.1) family. The complex is composed of two ATP-binding proteins (PhnC), two transmembrane proteins (PhnE) and a solute-binding protein (PhnD).

It localises to the cell inner membrane. It catalyses the reaction phosphonate(out) + ATP + H2O = phosphonate(in) + ADP + phosphate + H(+). Functionally, part of the ABC transporter complex PhnCDE involved in phosphonates import. Responsible for energy coupling to the transport system. The polypeptide is Phosphonates import ATP-binding protein PhnC (Escherichia coli O6:H1 (strain CFT073 / ATCC 700928 / UPEC)).